Consider the following 626-residue polypeptide: Transketolase-like protein 2 (626 aa).

Thiamine diphosphate-binding positions include Ser41, His78, and 124–126; that span reads GSL. Asp156 contributes to the Mg(2+) binding site. Residues Gly157 and Asn186 each coordinate thiamine diphosphate. Mg(2+) contacts are provided by Asn186 and Leu188. Residues Lys248 and His262 each coordinate thiamine diphosphate. 2 residues coordinate substrate: His262 and Ser349. Thiamine diphosphate is bound by residues Glu370 and Phe396. The active-site Proton donor is the Glu370. Residues His420 and Asp428 each coordinate substrate. Thiamine diphosphate is bound at residue Gln432.

Belongs to the transketolase family. Homodimer. The cofactor is Mg(2+). Ca(2+) serves as cofactor. Mn(2+) is required as a cofactor. It depends on Co(2+) as a cofactor. Requires thiamine diphosphate as cofactor. Overexpressed in hepatoma cancer cells.

It catalyses the reaction D-sedoheptulose 7-phosphate + D-glyceraldehyde 3-phosphate = aldehydo-D-ribose 5-phosphate + D-xylulose 5-phosphate. Its function is as follows. Plays an essential role in total transketolase activity and cell proliferation in cancer cells; after transfection with anti-TKTL1 siRNA, total transketolase activity dramatically decreases and proliferation was significantly inhibited in cancer cells. Plays a pivotal role in carcinogenesis. In Homo sapiens (Human), this protein is Transketolase-like protein 2 (TKTL2).